A 384-amino-acid chain; its full sequence is 8-amino-7-oxononanoate synthase (384 aa).

A substrate-binding site is contributed by Arg21. Position 108–109 (108–109 (GF)) interacts with pyridoxal 5'-phosphate. His133 serves as a coordination point for substrate. Ser179, His207, and Thr233 together coordinate pyridoxal 5'-phosphate. The residue at position 236 (Lys236) is an N6-(pyridoxal phosphate)lysine. Substrate is bound at residue Thr352.

It belongs to the class-II pyridoxal-phosphate-dependent aminotransferase family. BioF subfamily. Homodimer. Pyridoxal 5'-phosphate is required as a cofactor.

It carries out the reaction 6-carboxyhexanoyl-[ACP] + L-alanine + H(+) = (8S)-8-amino-7-oxononanoate + holo-[ACP] + CO2. Its pathway is cofactor biosynthesis; biotin biosynthesis. Its function is as follows. Catalyzes the decarboxylative condensation of pimeloyl-[acyl-carrier protein] and L-alanine to produce 8-amino-7-oxononanoate (AON), [acyl-carrier protein], and carbon dioxide. This Citrobacter koseri (strain ATCC BAA-895 / CDC 4225-83 / SGSC4696) protein is 8-amino-7-oxononanoate synthase.